The sequence spans 177 residues: Large ribosomal subunit protein uL30 (177 aa).

The protein belongs to the universal ribosomal protein uL30 family. In terms of assembly, part of the 50S ribosomal subunit.

The polypeptide is Large ribosomal subunit protein uL30 (Pyrobaculum islandicum (strain DSM 4184 / JCM 9189 / GEO3)).